The primary structure comprises 421 residues: Probable G-protein coupled receptor 151 (421 aa).

Over 1-44 (MGKATLAVFADSDSSNMNESFAHLHFAGGYLPSDSKGWRTIIPS) the chain is Extracellular. N18 is a glycosylation site (N-linked (GlcNAc...) asparagine). Residues 45-65 (LLAAVCLVGFVGNLCVIGLLL) form a helical membrane-spanning segment. Topologically, residues 66-74 (HGVWKRKPS) are cytoplasmic. The helical transmembrane segment at 75-95 (MIHSLILNLSLADISLLLFSA) threads the bilayer. Residues 96–122 (PVRATAYVKGVWDLGWFVCKSSDWFTH) lie on the Extracellular side of the membrane. C114 and C190 are oxidised to a cystine. The chain crosses the membrane as a helical span at residues 123–143 (MCMAAKSLTFVVVAKVCFMYA). Over 144-156 (SDPAKPVGTHNCT) the chain is Cytoplasmic. The chain crosses the membrane as a helical span at residues 157-177 (IWSLLGAIWVVASLLPLPEWF). Residues 178–204 (FSTTRHHAGVEMCLVDVPAVAAEFMSL) lie on the Extracellular side of the membrane. A helical transmembrane segment spans residues 205 to 225 (FGKLYPLLVFCLPLLLAGFYF). The Cytoplasmic portion of the chain corresponds to 226-258 (WRAYNQCKIRCAKTQNLRNQMRSKQLTVMLLST). The helical transmembrane segment at 259-279 (AVTSALLWLPEWIAWLWVWHL) threads the bilayer. Topologically, residues 280–289 (KAGGPMPPQG) are extracellular. Residues 290 to 310 (FIALSQVLMFSISTVNPLIFL) form a helical membrane-spanning segment. The Cytoplasmic portion of the chain corresponds to 311–421 (MMSEEFKAGL…HEGQETKGCN (111 aa)). Disordered stretches follow at residues 346–381 (IETLPGKAPSPETQTCIPDTDRCGSPDSSKETTDKV) and 394–421 (HERDVGPSAQDNDPIPWEHEGQETKGCN). 2 stretches are compositionally biased toward basic and acidic residues: residues 364-379 (DTDRCGSPDSSKETTD) and 409-421 (PWEHEGQETKGCN).

It belongs to the G-protein coupled receptor 1 family. In terms of tissue distribution, exclusively expressed in neurons of the habenular complex. The expression is particularly prominent in the medial habenular nucleus, whereas the lateral habenular nucleus exhibited a lower level of expression.

Its subcellular location is the cell membrane. Functionally, orphan receptor. The sequence is that of Probable G-protein coupled receptor 151 (Gpr151) from Rattus norvegicus (Rat).